The chain runs to 185 residues: Peroxynitrite isomerase (185 aa).

A disordered region spans residues 1 to 21 (MHHPARELPFPDALRPGARPA). The GXWXGXG signature appears at 34 to 40 (GTWRGTG). Position 171 (His171) interacts with heme b.

The protein belongs to the nitrobindin family. Homodimer. It depends on heme b as a cofactor.

It catalyses the reaction peroxynitrite = nitrate. The protein operates within nitrogen metabolism. Functionally, heme-binding protein able to scavenge peroxynitrite and to protect free L-tyrosine against peroxynitrite-mediated nitration, by acting as a peroxynitrite isomerase that converts peroxynitrite to nitrate. Therefore, this protein likely plays a role in peroxynitrite sensing and in the detoxification of reactive nitrogen and oxygen species (RNS and ROS, respectively). Is able to bind nitric oxide (NO) in vitro, but may act as a sensor of peroxynitrite levels in vivo. This chain is Peroxynitrite isomerase, found in Streptomyces griseus subsp. griseus (strain JCM 4626 / CBS 651.72 / NBRC 13350 / KCC S-0626 / ISP 5235).